The sequence spans 168 residues: Protein OPG162 (168 aa).

The Intravirion portion of the chain corresponds to 1–14; the sequence is MKSLNRQTVSMFKK. Residues 15–37 traverse the membrane as a helical segment; the sequence is LSVPAAIMMILSTIISGIGTFLH. Topologically, residues 38 to 168 are virion surface; the sequence is YKEELMPSAC…SVLCVKKFYK (131 aa). Positions 54–163 constitute a C-type lectin domain; sequence YDKHCYLDTN…CKSTQSVLCV (110 aa). Cystine bridges form between C75-C162 and C141-C154. N133 is a glycosylation site (N-linked (GlcNAc...) asparagine; by host).

The protein belongs to the orthopoxvirus OPG162 protein family. In terms of assembly, interacts with protein OPG161. Interacts with protein OPG164. Interacts with protein OPG190.

The protein resides in the virion membrane. The protein localises to the host Golgi apparatus. Forms a complex with OPG162 and OPG190 to coordinate the incorporation of OPG164 into wrapped enveloped virion (EV) membranes and, subsequently, the production of actin tails. Therefore plays an essential role in efficient cell-to-cell spread of viral particles. The protein is Protein OPG162 (OPG162) of Homo sapiens (Human).